The following is a 428-amino-acid chain: L-gulono-1,4-lactone dehydrogenase (428 aa).

An FAD-binding PCMH-type domain is found at 12–179 (QVCAPSAIVR…SQVTLQTVPL (168 aa)).

Belongs to the oxygen-dependent FAD-linked oxidoreductase family. A divalent metal cation is required as a cofactor.

It carries out the reaction L-gulono-1,4-lactone + 2 Fe(III)-[cytochrome c] = L-ascorbate + 2 Fe(II)-[cytochrome c] + 3 H(+). It functions in the pathway cofactor biosynthesis; L-ascorbate biosynthesis. In terms of biological role, oxidizes L-gulono-1,4-lactone to L-xylo-hexulonolactone which spontaneously isomerizes to L-ascorbate. This chain is L-gulono-1,4-lactone dehydrogenase, found in Mycobacterium tuberculosis (strain CDC 1551 / Oshkosh).